The sequence spans 200 residues: Peptidyl-tRNA hydrolase (200 aa).

Tyr16 serves as a coordination point for tRNA. The active-site Proton acceptor is the His21. TRNA-binding residues include Phe67, Asn69, and Asn115.

It belongs to the PTH family. In terms of assembly, monomer.

It is found in the cytoplasm. The enzyme catalyses an N-acyl-L-alpha-aminoacyl-tRNA + H2O = an N-acyl-L-amino acid + a tRNA + H(+). Hydrolyzes ribosome-free peptidyl-tRNAs (with 1 or more amino acids incorporated), which drop off the ribosome during protein synthesis, or as a result of ribosome stalling. Its function is as follows. Catalyzes the release of premature peptidyl moieties from peptidyl-tRNA molecules trapped in stalled 50S ribosomal subunits, and thus maintains levels of free tRNAs and 50S ribosomes. This is Peptidyl-tRNA hydrolase from Prochlorococcus marinus (strain AS9601).